The primary structure comprises 245 residues: Fibroblast growth factor 13 (245 aa).

Disordered stretches follow at residues 1–37 (MAAA…SKGN) and 213–245 (TEFS…NDST). A mediates targeting to the nucleus region spans residues 1 to 62 (MAAAIASSLI…GSKKRRRRRP (62 aa)). The segment covering 215 to 245 (FSRSGSGTPTKSRSVSGVLNGGKSMSQNDST) has biased composition (polar residues).

It belongs to the heparin-binding growth factors family.

It localises to the cell projection. Its subcellular location is the filopodium. It is found in the growth cone. The protein localises to the dendrite. The protein resides in the cell membrane. It localises to the sarcolemma. Its subcellular location is the cytoplasm. Microtubule-binding protein which directly binds tubulin and is involved in both polymerization and stabilization of microtubules. Through its action on microtubules, may participate in the refinement of axons by negatively regulating axonal and leading processes branching. Plays a crucial role in neuron polarization and migration. Regulates voltage-gated sodium channel transport and function. Required for proper head development, it is involved in neural differentiation through regulation of the mek5-erk5 pathway. In Xenopus laevis (African clawed frog), this protein is Fibroblast growth factor 13 (fgf13).